The sequence spans 315 residues: Spermidine synthase 1 (315 aa).

Residues 25–262 enclose the PABS domain; that stretch reads PGWFSEISPL…GMIGFMLCST (238 aa). Position 56 (Gln-56) interacts with S-adenosyl 3-(methylsulfanyl)propylamine. Position 86 (Tyr-86) interacts with putrescine. S-adenosyl 3-(methylsulfanyl)propylamine-binding positions include Gln-87, Asp-111, Glu-131, 162-163, and Asp-181; that span reads DG. Asp-181 functions as the Proton acceptor in the catalytic mechanism. Putrescine contacts are provided by residues 181-184 and Tyr-250; that span reads DSSD.

The protein belongs to the spermidine/spermine synthase family.

It carries out the reaction S-adenosyl 3-(methylsulfanyl)propylamine + putrescine = S-methyl-5'-thioadenosine + spermidine + H(+). It participates in amine and polyamine biosynthesis; spermidine biosynthesis; spermidine from putrescine: step 1/1. The sequence is that of Spermidine synthase 1 from Hyoscyamus niger (Black henbane).